A 367-amino-acid chain; its full sequence is Probable outer membrane usher protein LpfC (367 aa).

Residues 1–30 (MSRKTVSRTFSSFSISVVAVAVASTFSAHA) form the signal peptide.

The protein belongs to the fimbrial export usher family.

It localises to the cell outer membrane. In terms of biological role, part of the lpfABCC'DE fimbrial operon. LP fimbriae may participate in the interaction with eukaryotic cells by assisting in microcolony formation. Could be involved in the export and assembly of the fimbrial subunits across the outer membrane. This chain is Probable outer membrane usher protein LpfC (lpfC), found in Escherichia coli O157:H7.